The following is a 121-amino-acid chain: Holo-[acyl-carrier-protein] synthase (121 aa).

Mg(2+) contacts are provided by Asp6 and Glu55.

This sequence belongs to the P-Pant transferase superfamily. AcpS family. The cofactor is Mg(2+).

The protein localises to the cytoplasm. It catalyses the reaction apo-[ACP] + CoA = holo-[ACP] + adenosine 3',5'-bisphosphate + H(+). In terms of biological role, transfers the 4'-phosphopantetheine moiety from coenzyme A to a Ser of acyl-carrier-protein. In Chloroherpeton thalassium (strain ATCC 35110 / GB-78), this protein is Holo-[acyl-carrier-protein] synthase.